Here is a 228-residue protein sequence, read N- to C-terminus: Ephrin-A5 (228 aa).

The N-terminal stretch at 1–20 is a signal peptide; it reads MLHVEMLTLVFLVLWMCVFS. One can recognise an Ephrin RBD domain in the interval 29 to 162; that stretch reads ADRYAVYWNS…KLKVFVRPTN (134 aa). Asn-37 carries N-linked (GlcNAc...) asparagine glycosylation. Intrachain disulfides connect Cys-62/Cys-102 and Cys-90/Cys-151. The tract at residues 186–205 is disordered; that stretch reads EPADDTVHESAEPSRGENAA. The segment covering 190 to 200 has biased composition (basic and acidic residues); the sequence is DTVHESAEPSR. A lipid anchor (GPI-anchor amidated asparagine) is attached at Asn-203. A propeptide spans 204–228 (removed in mature form); it reads AAQTPRIPSRLLAILLFLLAMLLTL.

This sequence belongs to the ephrin family. Binds to EPHB2. Interacts with EPHA8; activates EPHA8. Binds to the receptor tyrosine kinases EPHA2, EPHA3 and EPHB1. Forms a ternary EFNA5-EPHA3-ADAM10 complex mediating EFNA5 extracellular domain shedding by ADAM10 which regulates the EFNA5-EPHA3 complex internalization and function.

The protein localises to the cell membrane. It is found in the membrane. Its subcellular location is the caveola. Cell surface GPI-bound ligand for Eph receptors, a family of receptor tyrosine kinases which are crucial for migration, repulsion and adhesion during neuronal, vascular and epithelial development. Binds promiscuously Eph receptors residing on adjacent cells, leading to contact-dependent bidirectional signaling into neighboring cells. The signaling pathway downstream of the receptor is referred to as forward signaling while the signaling pathway downstream of the ephrin ligand is referred to as reverse signaling. Induces compartmentalized signaling within a caveolae-like membrane microdomain when bound to the extracellular domain of its cognate receptor. This signaling event requires the activity of the Fyn tyrosine kinase. Activates the EPHA3 receptor to regulate cell-cell adhesion and cytoskeletal organization. With the receptor EPHA2 may regulate lens fiber cells shape and interactions and be important for lens transparency maintenance. May function actively to stimulate axon fasciculation. The interaction of EFNA5 with EPHA5 also mediates communication between pancreatic islet cells to regulate glucose-stimulated insulin secretion. Cognate/functional ligand for EPHA7, their interaction regulates brain development modulating cell-cell adhesion and repulsion. The protein is Ephrin-A5 (EFNA5) of Homo sapiens (Human).